The primary structure comprises 689 residues: Glycine--tRNA ligase beta subunit (689 aa).

The protein belongs to the class-II aminoacyl-tRNA synthetase family. In terms of assembly, tetramer of two alpha and two beta subunits.

It is found in the cytoplasm. The enzyme catalyses tRNA(Gly) + glycine + ATP = glycyl-tRNA(Gly) + AMP + diphosphate. The polypeptide is Glycine--tRNA ligase beta subunit (Salmonella typhi).